The chain runs to 559 residues: MTEPLLDSSSDDEPSLVLPENINQPFTTGAEVFGWCLYSWAAEPFIVSVVGTYVPLLLEQIARDNGVKLIDKITPCNQPHDPTIPIPSPPKDGDFPNSTLTYASQNDSCVLPMFGGRFYIDTSSYALYTFSMSVLIQTILVISMSGAADRGSHRKSMLVGFGVTGGLITMCYWLVDDRNYYMASMLAILANSAFGGVNVCGNSFLSLLVNNHPSVRQIHLSKSLKLARMGEISSKISGICAASGYISALLMQIITMLVILHVRNNPNIDSLIYPLKLVIGLVGLWWFVFQLPIQFLLKPRLSKELHVSIEPPDPSKPGYSVNIVRYKMLVVGAYILHGYKTLFSAARAASQLKDIMAFLLGWFIISDSLTTINSTAILFAKSDLQMTTVQLSQIGVLTMISAIAGSVLLPNVIQPYFKLGLKQTMILIIVWASLIPLYGILGFFIRSLGLHHAVEMYVLAIWYGFSLGGVATISRSLYSMLIPPGQESVFFALFSITDKGSSIVGPFLVGLIIDKTHDIRKCFWLLFVFLIAAVPVFWYGIDVDRGINEATVLEHEQDG.

The helical transmembrane segment at 32-52 (VFGWCLYSWAAEPFIVSVVGT) threads the bilayer. N97 and N106 each carry an N-linked (GlcNAc...) asparagine glycan. 11 helical membrane passes run 126-146 (ALYT…SMSG), 156-176 (SMLV…WLVD), 181-201 (YMAS…NVCG), 239-259 (ICAA…MLVI), 277-297 (LVIG…QFLL), 358-378 (FLLG…TAIL), 393-413 (QIGV…PNVI), 425-445 (MILI…GFFI), 453-473 (AVEM…VATI), 493-513 (LFSI…GLII), and 523-543 (FWLL…GIDV).

The protein belongs to the ATG22 family.

It is found in the vacuole membrane. Vacuolar effluxer which mediate the efflux of amino acids resulting from autophagic degradation. The release of autophagic amino acids allows the maintenance of protein synthesis and viability during nitrogen starvation. This chain is Autophagy-related protein 22 (ATG22), found in Pichia angusta (Yeast).